A 205-amino-acid chain; its full sequence is CASP-like protein 0U1 (205 aa).

Topologically, residues 1–38 (MDDAPGASDEAREPLLKRVGASVEGTSLMNHRLMKNPK) are cytoplasmic. The helical transmembrane segment at 39–57 (FRALLVESLMALTTFSFMA) threads the bilayer. Residues 58–89 (KQTEGLAGPELSTLNDCGEAGCGFTKFYQFKG) lie on the Extracellular side of the membrane. A helical transmembrane segment spans residues 90-110 (VVGVYAGFWAYTVILIAMYVI). The Cytoplasmic portion of the chain corresponds to 111-124 (RKAPPPGTEFASYA). Residues 125 to 145 (LFTAAMATFVVMSITECASVV) form a helical membrane-spanning segment. The Extracellular segment spans residues 146 to 159 (LSSDYYVCKNADYS). The chain crosses the membrane as a helical span at residues 160–180 (LVSLIFAAATIVLNCLTCAFA). At 181-205 (WRQWGELKFVGLPKTLSALTETYPG) the chain is on the cytoplasmic side.

The protein belongs to the Casparian strip membrane proteins (CASP) family. Homodimer and heterodimers.

The protein resides in the cell membrane. In Ostreococcus lucimarinus (strain CCE9901), this protein is CASP-like protein 0U1.